Here is a 450-residue protein sequence, read N- to C-terminus: Molybdate-anion transporter (450 aa).

12 helical membrane-spanning segments follow: residues 1-21, 43-63, 79-99, 128-148, 176-196, 198-218, 249-269, 278-298, 311-331, 344-364, 376-396, and 409-429; these read MLVT…GLEL, LDFY…APYL, ILYV…SSLV, FVLL…FSAF, FWNH…ACWM, LGPV…GALA, VLLL…FVFL, GAPL…GSSL, PMHL…MLTF, FIAF…MSFL, GVLN…LLVL, and FSIC…LFTV.

It belongs to the major facilitator superfamily.

It localises to the cell membrane. Mediates high-affinity intracellular uptake of the rare oligo-element molybdenum. This chain is Molybdate-anion transporter (MFSD5), found in Bos taurus (Bovine).